A 109-amino-acid chain; its full sequence is Nascent polypeptide-associated complex protein (109 aa).

An NAC-A/B domain is found at 3–69; the sequence is PMNPKQLKKL…TEEERVVLKI (67 aa).

Belongs to the NAC-alpha family. In terms of assembly, homodimer. Interacts with the ribosome. Binds ribosomal RNA.

Functionally, contacts the emerging nascent chain on the ribosome. The polypeptide is Nascent polypeptide-associated complex protein (Pyrococcus abyssi (strain GE5 / Orsay)).